The primary structure comprises 315 residues: MGLALEKVCFLGVIFLISACTVKKEGVKNLSYKHESLRAYENAKDYDPTTKKAAYKRNFFERHFKRYSDSQDSNTKDQPLDNGMRDSSSIQRATMRPYQVGGKWYYPTKVDLGEKFDGVASWYGPNFHAKKTSNGEIYNMYAHTAAHKTLPMNTVVKVINVDNNLSTIVRINDRGPFVSDRIIDLSNAAARDIDMVKKGTASVRLIVLGFGGVISTQYEQSFNASSSKILHKEFKVGESEKSVSGGKFSLQMGAFRNQIGAQTLADKLQAENPNYSVKVAFKDDLYKVLVQGFQSEEEARDFMKKYNQNAVLTRE.

Positions 1 to 19 are cleaved as a signal peptide; that stretch reads MGLALEKVCFLGVIFLISA. Cys20 is lipidated: N-palmitoyl cysteine. Residue Cys20 is the site of S-diacylglycerol cysteine attachment. Residues 68 to 79 are compositionally biased toward basic and acidic residues; sequence SDSQDSNTKDQP. A disordered region spans residues 68 to 92; sequence SDSQDSNTKDQPLDNGMRDSSSIQR. One can recognise an SPOR domain in the interval 242–315; the sequence is SVSGGKFSLQ…YNQNAVLTRE (74 aa).

Belongs to the RlpA family.

It is found in the cell membrane. Functionally, lytic transglycosylase with a strong preference for naked glycan strands that lack stem peptides. This Helicobacter pylori (strain ATCC 700392 / 26695) (Campylobacter pylori) protein is Endolytic peptidoglycan transglycosylase RlpA.